The sequence spans 538 residues: CTP synthase (538 aa).

An amidoligase domain region spans residues 1 to 269 (MSPRKYVIVT…ARLVERRLFG (269 aa)). S15 lines the CTP pocket. UTP is bound at residue S15. 16 to 21 (SVGKGL) is a binding site for ATP. Y56 is a binding site for L-glutamine. D73 is a binding site for ATP. Positions 73 and 143 each coordinate Mg(2+). Residues 150 to 152 (DIE), 190 to 195 (KTKPVQ), and K226 contribute to the CTP site. Residues 190-195 (KTKPVQ) and K226 each bind UTP. In terms of domain architecture, Glutamine amidotransferase type-1 spans 294–538 (KVAMVGKYTK…FVTAVARLRG (245 aa)). G358 contacts L-glutamine. C385 functions as the Nucleophile; for glutamine hydrolysis in the catalytic mechanism. Residues 386-389 (FGMQ), E409, and R466 each bind L-glutamine. Residues H512 and E514 contribute to the active site.

Belongs to the CTP synthase family. Homotetramer.

It carries out the reaction UTP + L-glutamine + ATP + H2O = CTP + L-glutamate + ADP + phosphate + 2 H(+). The catalysed reaction is L-glutamine + H2O = L-glutamate + NH4(+). It catalyses the reaction UTP + NH4(+) + ATP = CTP + ADP + phosphate + 2 H(+). It functions in the pathway pyrimidine metabolism; CTP biosynthesis via de novo pathway; CTP from UDP: step 2/2. With respect to regulation, allosterically activated by GTP, when glutamine is the substrate; GTP has no effect on the reaction when ammonia is the substrate. The allosteric effector GTP functions by stabilizing the protein conformation that binds the tetrahedral intermediate(s) formed during glutamine hydrolysis. Inhibited by the product CTP, via allosteric rather than competitive inhibition. In terms of biological role, catalyzes the ATP-dependent amination of UTP to CTP with either L-glutamine or ammonia as the source of nitrogen. Regulates intracellular CTP levels through interactions with the four ribonucleotide triphosphates. In Aeropyrum pernix (strain ATCC 700893 / DSM 11879 / JCM 9820 / NBRC 100138 / K1), this protein is CTP synthase.